We begin with the raw amino-acid sequence, 312 residues long: Aspartoacylase (312 aa).

The Zn(2+) site is built by histidine 20 and glutamate 23. Positions 62, 69, and 70 each coordinate N-acetyl-L-aspartate. Histidine 115 is a Zn(2+) binding site. Residues tyrosine 163 and arginine 167 each contribute to the N-acetyl-L-aspartate site. Glutamate 177 acts as the Proton donor/acceptor in catalysis. Residue tyrosine 287 coordinates N-acetyl-L-aspartate.

This sequence belongs to the AspA/AstE family. Aspartoacylase subfamily. In terms of assembly, homodimer. The cofactor is Zn(2+).

The protein resides in the cytoplasm. It localises to the nucleus. The enzyme catalyses an N-acyl-L-aspartate + H2O = a carboxylate + L-aspartate. It catalyses the reaction N-acetyl-L-aspartate + H2O = L-aspartate + acetate. Functionally, catalyzes the deacetylation of N-acetylaspartic acid (NAA) to produce acetate and L-aspartate. NAA occurs in high concentration in brain and its hydrolysis NAA plays a significant part in the maintenance of intact white matter. In other tissues it acts as a scavenger of NAA from body fluids. This Mus musculus (Mouse) protein is Aspartoacylase.